Consider the following 59-residue polypeptide: Large ribosomal subunit protein bL32 (59 aa).

The tract at residues 1-23 is disordered; it reads MAVQQNKKSPSKRGMHRSHDFLT.

The protein belongs to the bacterial ribosomal protein bL32 family.

The chain is Large ribosomal subunit protein bL32 from Burkholderia multivorans (strain ATCC 17616 / 249).